The sequence spans 337 residues: Phenylalanine--tRNA ligase alpha subunit (337 aa).

E252 is a Mg(2+) binding site.

The protein belongs to the class-II aminoacyl-tRNA synthetase family. Phe-tRNA synthetase alpha subunit type 1 subfamily. As to quaternary structure, tetramer of two alpha and two beta subunits. Mg(2+) is required as a cofactor.

It localises to the cytoplasm. It carries out the reaction tRNA(Phe) + L-phenylalanine + ATP = L-phenylalanyl-tRNA(Phe) + AMP + diphosphate + H(+). This is Phenylalanine--tRNA ligase alpha subunit from Francisella tularensis subsp. holarctica (strain OSU18).